Reading from the N-terminus, the 1591-residue chain is Rho guanine nucleotide exchange factor TIAM1 (1591 aa).

Residues 1-78 (MGNAESQHVE…AENGLEPFSQ (78 aa)) form a disordered region. A lipid anchor (N-myristoyl glycine) is attached at G2. Residues 7-19 (QHVEHEFYGEKHA) are compositionally biased toward basic and acidic residues. The span at 20–49 (SLGRKHTSRSLRLSHKTRRTRHASSGKVIH) shows a compositional bias: basic residues. Residues 53–67 (EVSTRSSSTPSIPQS) are compositionally biased toward low complexity. S231 is subject to Phosphoserine. 2 disordered regions span residues 298-379 (SEGA…GDAA) and 393-422 (MSTTNSESLEEAGSAHSDEQSSGTLSSPGQ). 2 stretches are compositionally biased toward polar residues: residues 300–313 (GATNPQISHSNSMQ) and 340–361 (TTDTDLLSRRSNATNSSYSPTT). Residues S356 and S358 each carry the phosphoserine modification. A compositionally biased stretch (low complexity) spans 367-377 (GSDSGSSSTGD). Residues 412-422 (QSSGTLSSPGQ) are compositionally biased toward polar residues. Residues 434-549 (VRKAGALAVK…TAIHSACATA (116 aa)) enclose the PH 1 domain. S695 is modified (phosphoserine). The RBD domain maps to 765-832 (TPSWFCLPNN…QPEEDIYELL (68 aa)). The residue at position 829 (Y829) is a Phosphotyrosine; by NTRK2. Residues 845 to 908 (SIHIEKSDTA…NNRAADALNS (64 aa)) enclose the PDZ domain. A disordered region spans residues 939–1034 (SPPHRVDGPA…TGPQLATMRQ (96 aa)). Positions 958–975 (LTSNPGHSLCSEQGSSAE) are enriched in polar residues. The span at 977-990 (APEETEGPDLESSD) shows a compositional bias: acidic residues. Residues 1014-1024 (PSDQSPSPQDS) are compositionally biased toward low complexity. Positions 1025-1034 (TGPQLATMRQ) are enriched in polar residues. One can recognise a DH domain in the interval 1040–1234 (KLRKVICELL…NKVASHINEM (195 aa)). The region spanning 1261-1397 (DLSMGDLLLH…KAVHSILRDK (137 aa)) is the PH 2 domain. Y1323 is modified (phosphotyrosine). Residues K1404 and K1420 each participate in a glycyl lysine isopeptide (Lys-Gly) (interchain with G-Cter in ubiquitin) cross-link. Residues 1456–1482 (TIDSDAVSASSPEKESQQPPGGGDTDR) form a disordered region. Phosphoserine is present on S1519.

This sequence belongs to the TIAM family. In terms of assembly, component of the Par polarity complex, composed of at least phosphorylated PRKCZ, PARD3 and TIAM1. Interacts with NTRK2; mediates the activation of RAC1 by BDNF. Interacts with MAPK8IP2 and CD44. Interacts with BAIAP2. Interacts with EPHA8; regulates clathrin-mediated endocytosis of EPHA8. Interacts with PARD3. Interacts (via PDZ domain) with CNTNAP4, SDC1 and SDC3 (via C-terminus). Ubiquitinated. Undergoes 'Lys-48' ubiquitination at Lys-1404 and Lys-1420 by a CUL3(KBTBD6/7) E3 ubiquitin ligase complex composed of CUL3, RBX1, KBTBD6 and KBTBD7. 'Lys-48' ubiquitination at Lys-1404 and Lys-1420 triggers proteasomal degradation. Ubiquitination at Lys-1404 and Lys-1420 by CUL3(KBTBD6/7) also requires the membrane-associated protein GABARAP and may therefore be spatially restricted within the cell. In terms of tissue distribution, found in virtually all analyzed tumor cell lines including B- and T-lymphomas, neuroblastomas, melanomas and carcinomas.

It is found in the cell junction. It localises to the cell membrane. Functionally, guanyl-nucleotide exchange factor that activates RHO-like proteins and connects extracellular signals to cytoskeletal activities. Activates RAC1, CDC42, and to a lesser extent RHOA and their downstream signaling to regulate processes like cell adhesion and cell migration. The polypeptide is Rho guanine nucleotide exchange factor TIAM1 (Homo sapiens (Human)).